The sequence spans 449 residues: MAQRLEAKGGKGGNQWDDGADHENVTKIHVRGGLEGIQFIKFEYVKAGQTVVGPIHGVSGKGFTQTFEINHLNGEHVVSVKGCYDNISGVIQALQFETNQRSSEVMGYDDTGTKFTLEISGNKITGFHGSADANLKSLGAYFTPPPPIKQEYQGGTGGSPWDHGIYTGIRKVYVTFSPVSISHIKVDYDKDGKVETRQDGDMLGENRVQGQPNEFVVDYPYEYITSIEVTCDKVSGNTNRVRSLSFKTSKDRTSPTYGRKSERTFVFESKGRALVGLHGRCCWAIDALGAHFGAPPIPPPPPTEKLQGSGGDGGESWDDGAFDGVRKIYVGQGENGIASVKFVYDKNNQLVLGEEHGKHTLLGYEEFELDYPSEYITAVEGYYDKVFGSESSVIVMLKFKTNKRTSPPYGMDAGVSFILGKEGHKVVGFHGKASPELYQIGVTVAPITK.

Disordered stretches follow at residues 1 to 20 and 294 to 314; these read MAQR…DDGA and APPI…GDGG. Ala2 bears the N-acetylalanine mark. Jacalin-type lectin domains lie at 2 to 144, 147 to 294, and 303 to 446; these read AQRL…YFTP, PIKQ…HFGA, and TEKL…TVAP.

This sequence belongs to the jacalin lectin family.

This is Jacalin-related lectin 20 (JAL20) from Arabidopsis thaliana (Mouse-ear cress).